We begin with the raw amino-acid sequence, 61 residues long: Pleurocidin-like peptide WF3 (61 aa).

The first 22 residues, 1–22 (MKFTATFLVLSLVVLMAEPGEC), serve as a signal peptide directing secretion. The propeptide occupies 48 to 61 (YDEQQELNKRAVDE).

This sequence belongs to the pleurocidin family.

The protein resides in the secreted. Its function is as follows. Antimicrobial peptide. The sequence is that of Pleurocidin-like peptide WF3 (ple3) from Pseudopleuronectes americanus (Winter flounder).